Reading from the N-terminus, the 100-residue chain is Aspartyl/glutamyl-tRNA(Asn/Gln) amidotransferase subunit C (100 aa).

Belongs to the GatC family. Heterotrimer of A, B and C subunits.

The enzyme catalyses L-glutamyl-tRNA(Gln) + L-glutamine + ATP + H2O = L-glutaminyl-tRNA(Gln) + L-glutamate + ADP + phosphate + H(+). The catalysed reaction is L-aspartyl-tRNA(Asn) + L-glutamine + ATP + H2O = L-asparaginyl-tRNA(Asn) + L-glutamate + ADP + phosphate + 2 H(+). Functionally, allows the formation of correctly charged Asn-tRNA(Asn) or Gln-tRNA(Gln) through the transamidation of misacylated Asp-tRNA(Asn) or Glu-tRNA(Gln) in organisms which lack either or both of asparaginyl-tRNA or glutaminyl-tRNA synthetases. The reaction takes place in the presence of glutamine and ATP through an activated phospho-Asp-tRNA(Asn) or phospho-Glu-tRNA(Gln). The sequence is that of Aspartyl/glutamyl-tRNA(Asn/Gln) amidotransferase subunit C from Streptococcus gordonii (strain Challis / ATCC 35105 / BCRC 15272 / CH1 / DL1 / V288).